Consider the following 372-residue polypeptide: Coxsackievirus and adenovirus receptor homolog (372 aa).

The first 22 residues, 1-22 (MDMRTSFLCVTYVILLTGSACG), serve as a signal peptide directing secretion. Ig-like C2-type domains lie at 23–140 (LQIT…YLLT) and 130–234 (PGIA…VTIT). The Extracellular portion of the chain corresponds to 23-241 (LQITSTGQTS…TITQPPNTAG (219 aa)). 3 disulfides stabilise this stretch: Cys45-Cys124, Cys150-Cys227, and Cys166-Cys216. Residue Asn205 is glycosylated (N-linked (GlcNAc...) asparagine). The helical transmembrane segment at 242 to 262 (IIAGVIICILLLLILLALILF) threads the bilayer. Topologically, residues 263 to 372 (CCCRARHKKK…PAQNKDGSIV (110 aa)) are cytoplasmic. Residues 286 to 352 (PPPKSRVSTA…PPSRMAGPNL (67 aa)) form a disordered region. A compositionally biased stretch (polar residues) spans 291-317 (RVSTARSFTSVGSQRSSLGSMSPSNLH). Basic and acidic residues predominate over residues 318 to 336 (EYSKPQYDKIPSEEYDRPP).

As to quaternary structure, monomer. Probably homodimer formed by 2 molecules on adjacent cells.

It localises to the cell membrane. The protein resides in the basolateral cell membrane. The protein localises to the cell junction. Its subcellular location is the tight junction. It is found in the adherens junction. Its function is as follows. May function as a homophilic cell adhesion molecule and be essential for tight junction integrity. May also be involved in transepithelial migration of leukocytes through adhesive interactions with jaml. The interaction between both receptors may also mediate the activation of gamma-delta T-cells, a subpopulation of T-cells residing in epithelia and involved in tissue homeostasis and repair. The protein is Coxsackievirus and adenovirus receptor homolog (cxadr) of Danio rerio (Zebrafish).